Reading from the N-terminus, the 781-residue chain is AP-3 complex subunit beta (781 aa).

5 HEAT repeats span residues 113–151 (PNLA…ASLY), 153–186 (IILH…EQGI), 187–224 (SIKD…QELQ), 294–332 (DHDL…PKTF), and 521–559 (PRIC…HDVD). 2 disordered regions span residues 694-713 (KPKR…TSSH) and 731-781 (ARQS…ETTE). Residues 699-712 (ASVSSVPSNTFTSS) show a composition bias toward polar residues. Residues 746 to 758 (STSEETDHTDDES) are compositionally biased toward acidic residues. Residues 759 to 774 (GSSSGDESTESSYVSS) show a composition bias toward low complexity.

It belongs to the adaptor complexes large subunit family. As to quaternary structure, adaptor protein complex 3 (AP-3) is a heterotetramer composed of 2 large adaptins (APL5 and APL6), a medium adaptin (APM3) and a small adaptin (APS3).

It localises to the golgi apparatus. It is found in the cytoplasmic vesicle. The protein localises to the clathrin-coated vesicle membrane. Functionally, part of the AP-3 complex, an adaptor-related complex which is not clathrin-associated. The complex is associated with the Golgi region as well as more peripheral structures. It facilitates the budding of vesicles from the Golgi membrane and may be directly involved in trafficking to the vacuole. This Eremothecium gossypii (strain ATCC 10895 / CBS 109.51 / FGSC 9923 / NRRL Y-1056) (Yeast) protein is AP-3 complex subunit beta (APL6).